A 95-amino-acid polypeptide reads, in one-letter code: Aspartyl/glutamyl-tRNA(Asn/Gln) amidotransferase subunit C (95 aa).

Belongs to the GatC family. As to quaternary structure, heterotrimer of A, B and C subunits.

It catalyses the reaction L-glutamyl-tRNA(Gln) + L-glutamine + ATP + H2O = L-glutaminyl-tRNA(Gln) + L-glutamate + ADP + phosphate + H(+). It carries out the reaction L-aspartyl-tRNA(Asn) + L-glutamine + ATP + H2O = L-asparaginyl-tRNA(Asn) + L-glutamate + ADP + phosphate + 2 H(+). Allows the formation of correctly charged Asn-tRNA(Asn) or Gln-tRNA(Gln) through the transamidation of misacylated Asp-tRNA(Asn) or Glu-tRNA(Gln) in organisms which lack either or both of asparaginyl-tRNA or glutaminyl-tRNA synthetases. The reaction takes place in the presence of glutamine and ATP through an activated phospho-Asp-tRNA(Asn) or phospho-Glu-tRNA(Gln). This is Aspartyl/glutamyl-tRNA(Asn/Gln) amidotransferase subunit C from Methylobacterium sp. (strain 4-46).